The sequence spans 134 residues: Profilin-1 (134 aa).

C13 and C118 are disulfide-bonded. Positions 84–100 match the Involved in PIP2 interaction motif; the sequence is AVIRGKKGSGGITTKKT. T114 carries the phosphothreonine modification.

The protein belongs to the profilin family. Occurs in many kinds of cells as a complex with monomeric actin in a 1:1 ratio. In terms of processing, phosphorylated by MAP kinases.

It is found in the cytoplasm. It localises to the cytoskeleton. Its function is as follows. Binds to actin and affects the structure of the cytoskeleton. At high concentrations, profilin prevents the polymerization of actin, whereas it enhances it at low concentrations. The sequence is that of Profilin-1 from Olea europaea (Common olive).